Consider the following 150-residue polypeptide: Probable NADH dehydrogenase [ubiquinone] 1 alpha subcomplex subunit 5 (150 aa).

This sequence belongs to the complex I NDUFA5 subunit family. As to quaternary structure, complex I is composed of 45 different subunits.

The protein localises to the mitochondrion inner membrane. In terms of biological role, accessory subunit of the mitochondrial membrane respiratory chain NADH dehydrogenase (Complex I), that is believed not to be involved in catalysis. Complex I functions in the transfer of electrons from NADH to the respiratory chain. The immediate electron acceptor for the enzyme is believed to be ubiquinone. This chain is Probable NADH dehydrogenase [ubiquinone] 1 alpha subcomplex subunit 5, found in Caenorhabditis elegans.